We begin with the raw amino-acid sequence, 200 residues long: dTTP/UTP pyrophosphatase (200 aa).

Catalysis depends on aspartate 80, which acts as the Proton acceptor.

This sequence belongs to the Maf family. YhdE subfamily. A divalent metal cation serves as cofactor.

Its subcellular location is the cytoplasm. It catalyses the reaction dTTP + H2O = dTMP + diphosphate + H(+). It carries out the reaction UTP + H2O = UMP + diphosphate + H(+). Nucleoside triphosphate pyrophosphatase that hydrolyzes dTTP and UTP. May have a dual role in cell division arrest and in preventing the incorporation of modified nucleotides into cellular nucleic acids. The sequence is that of dTTP/UTP pyrophosphatase from Pasteurella multocida (strain Pm70).